Here is a 90-residue protein sequence, read N- to C-terminus: Large ribosomal subunit protein bL27 (90 aa).

Residues 1-21 (MAHKKAGGSSRNGRDSQAKRL) are disordered.

Belongs to the bacterial ribosomal protein bL27 family.

The chain is Large ribosomal subunit protein bL27 from Laribacter hongkongensis (strain HLHK9).